A 225-amino-acid polypeptide reads, in one-letter code: Octanoyltransferase (225 aa).

A BPL/LPL catalytic domain is found at 37 to 217 (SDTPDEFWVV…ELASLIGYQT (181 aa)). Substrate-binding positions include 76–83 (RGGQVTYH), 148–150 (SLG), and 161–163 (GLA). Cysteine 179 acts as the Acyl-thioester intermediate in catalysis.

Belongs to the LipB family.

The protein localises to the cytoplasm. It catalyses the reaction octanoyl-[ACP] + L-lysyl-[protein] = N(6)-octanoyl-L-lysyl-[protein] + holo-[ACP] + H(+). Its pathway is protein modification; protein lipoylation via endogenous pathway; protein N(6)-(lipoyl)lysine from octanoyl-[acyl-carrier-protein]: step 1/2. Functionally, catalyzes the transfer of endogenously produced octanoic acid from octanoyl-acyl-carrier-protein onto the lipoyl domains of lipoate-dependent enzymes. Lipoyl-ACP can also act as a substrate although octanoyl-ACP is likely to be the physiological substrate. The sequence is that of Octanoyltransferase from Aeromonas salmonicida (strain A449).